The sequence spans 141 residues: 15 kDa lipoprotein (141 aa).

The first 17 residues, 1–17 (MVKRGRFALCLAVLLGA), serve as a signal peptide directing secretion. The N-palmitoyl cysteine moiety is linked to residue cysteine 18. The S-diacylglycerol cysteine moiety is linked to residue cysteine 18.

Its subcellular location is the cell membrane. This Treponema pallidum (strain Nichols) protein is 15 kDa lipoprotein (tpp15).